Consider the following 598-residue polypeptide: 2-succinyl-5-enolpyruvyl-6-hydroxy-3-cyclohexene-1-carboxylate synthase (598 aa).

This sequence belongs to the TPP enzyme family. MenD subfamily. Homodimer. Mg(2+) is required as a cofactor. It depends on Mn(2+) as a cofactor. Requires thiamine diphosphate as cofactor.

The enzyme catalyses isochorismate + 2-oxoglutarate + H(+) = 5-enolpyruvoyl-6-hydroxy-2-succinyl-cyclohex-3-ene-1-carboxylate + CO2. Its pathway is quinol/quinone metabolism; 1,4-dihydroxy-2-naphthoate biosynthesis; 1,4-dihydroxy-2-naphthoate from chorismate: step 2/7. It functions in the pathway cofactor biosynthesis; phylloquinone biosynthesis. Its function is as follows. Catalyzes the thiamine diphosphate-dependent decarboxylation of 2-oxoglutarate and the subsequent addition of the resulting succinic semialdehyde-thiamine pyrophosphate anion to isochorismate to yield 2-succinyl-5-enolpyruvyl-6-hydroxy-3-cyclohexene-1-carboxylate (SEPHCHC). The chain is 2-succinyl-5-enolpyruvyl-6-hydroxy-3-cyclohexene-1-carboxylate synthase from Prochlorococcus marinus (strain NATL2A).